We begin with the raw amino-acid sequence, 246 residues long: MPVNENVILLDIEGTITSISFVKDTLFPYVTKVLEDYIEKYWDDESFQQDLELLRAQAVIDSNVEGFVPISTGDNAKTSVINNVLWQMTNDKKTTALKQLQGHIWKDGYESGLLRGHLYEDVLPVLNKLTDFGKKIYTYSSGSTKAQEYLFQYSMYGDVSGIFLKYFDTKMGPKGSETSYINIANEINVNCSDILFLTDVVVEAEAAVKAGCNSIFLVRPGNAPLDPEKSSKFRIIKTLDELLETE.

Residues D11 and E13 each contribute to the Mg(2+) site. Substrate is bound by residues S140–S141 and K174. Mg(2+) is bound at residue D199.

The protein belongs to the HAD-like hydrolase superfamily. MasA/MtnC family. In terms of assembly, monomer. Mg(2+) serves as cofactor.

It localises to the cytoplasm. Its subcellular location is the nucleus. The catalysed reaction is 5-methylsulfanyl-2,3-dioxopentyl phosphate + H2O = 1,2-dihydroxy-5-(methylsulfanyl)pent-1-en-3-one + phosphate. The protein operates within amino-acid biosynthesis; L-methionine biosynthesis via salvage pathway; L-methionine from S-methyl-5-thio-alpha-D-ribose 1-phosphate: step 3/6. It participates in amino-acid biosynthesis; L-methionine biosynthesis via salvage pathway; L-methionine from S-methyl-5-thio-alpha-D-ribose 1-phosphate: step 4/6. In terms of biological role, bifunctional enzyme that catalyzes the enolization of 2,3-diketo-5-methylthiopentyl-1-phosphate (DK-MTP-1-P) into the intermediate 2-hydroxy-3-keto-5-methylthiopentenyl-1-phosphate (HK-MTPenyl-1-P), which is then dephosphorylated to form the acireductone 1,2-dihydroxy-3-keto-5-methylthiopentene (DHK-MTPene). The sequence is that of Enolase-phosphatase E1 from Acyrthosiphon pisum (Pea aphid).